Reading from the N-terminus, the 121-residue chain is MQFTTIVMTLAAAVAVTAYPGSSSAFGVGQDEHKHHSSDDHSATGASKGATCAVGSQVSCCTTDSSGSDVLGNVLGGSCLVDNLSLISILNSQCPGANTFCCPSNQDGTLNIHAACIPVAL.

The N-terminal stretch at 1-18 is a signal peptide; it reads MQFTTIVMTLAAAVAVTA. Intrachain disulfides connect Cys-52/Cys-101, Cys-60/Cys-94, Cys-61/Cys-79, and Cys-102/Cys-116. Asn-83 carries an N-linked (GlcNAc...) asparagine glycan.

The protein belongs to the fungal hydrophobin family. In terms of assembly, self-assembles to form functional amyloid fibrils called rodlets. Self-assembly into fibrillar rodlets occurs spontaneously at hydrophobic:hydrophilic interfaces and the rodlets further associate laterally to form amphipathic monolayers. In terms of tissue distribution, expressed in conidia and aerial hyphae.

It localises to the secreted. The protein localises to the cell wall. Aerial growth, conidiation, and dispersal of filamentous fungi in the environment rely upon a capability of their secreting small amphipathic proteins called hydrophobins (HPBs) with low sequence identity. Class I can self-assemble into an outermost layer of rodlet bundles on aerial cell surfaces, conferring cellular hydrophobicity that supports fungal growth, development and dispersal; whereas Class II form highly ordered films at water-air interfaces through intermolecular interactions but contribute nothing to the rodlet structure. Hcf-2 is a class I hydrophobin that is not necessary for the development of hyphae or conidia but contributes to cell surface hydrophobicity. In Passalora fulva (Tomato leaf mold), this protein is Class I hydrophobin 2.